The following is a 72-amino-acid chain: Cytochrome b-c1 complex subunit 8-1, mitochondrial (72 aa).

Residues 1 to 41 lie on the Mitochondrial matrix side of the membrane; the sequence is MGKQPVKLKAVVYALSPFQQKIMTGLWKDLPEKIHHKVSEN. A helical membrane pass occupies residues 42 to 58; that stretch reads WISATLLVTPVVGTYWY. The Mitochondrial intermembrane segment spans residues 59–72; that stretch reads AQYFKEQEKLEHRF.

It belongs to the UQCRQ/QCR8 family. In terms of assembly, component of the ubiquinol-cytochrome c oxidoreductase (cytochrome b-c1 complex, complex III, CIII), a multisubunit enzyme composed of 10 subunits. The complex is composed of 3 respiratory subunits cytochrome b (MT-CYB), cytochrome c1 (CYC1-1 or CYC1-2) and Rieske protein (UCR1-1 or UCR1-2), 2 core protein subunits MPPalpha1 (or MPPalpha2) and MPPB, and 5 low-molecular weight protein subunits QCR7-1 (or QCR7-2), UCRQ-1 (or UCRQ-2), QCR9, UCRY and probably QCR6-1 (or QCR6-2). The complex exists as an obligatory dimer and forms supercomplexes (SCs) in the inner mitochondrial membrane with NADH-ubiquinone oxidoreductase (complex I, CI), resulting in different assemblies (supercomplexes SCI(1)III(2) and SCI(2)III(4)).

It localises to the mitochondrion inner membrane. Its function is as follows. Component of the ubiquinol-cytochrome c oxidoreductase, a multisubunit transmembrane complex that is part of the mitochondrial electron transport chain which drives oxidative phosphorylation. The respiratory chain contains 3 multisubunit complexes succinate dehydrogenase (complex II, CII), ubiquinol-cytochrome c oxidoreductase (cytochrome b-c1 complex, complex III, CIII) and cytochrome c oxidase (complex IV, CIV), that cooperate to transfer electrons derived from NADH and succinate to molecular oxygen, creating an electrochemical gradient over the inner membrane that drives transmembrane transport and the ATP synthase. The cytochrome b-c1 complex catalyzes electron transfer from ubiquinol to cytochrome c, linking this redox reaction to translocation of protons across the mitochondrial inner membrane, with protons being carried across the membrane as hydrogens on the quinol. In the process called Q cycle, 2 protons are consumed from the matrix, 4 protons are released into the intermembrane space and 2 electrons are passed to cytochrome c. This chain is Cytochrome b-c1 complex subunit 8-1, mitochondrial (UCRQ-1), found in Arabidopsis thaliana (Mouse-ear cress).